Here is a 352-residue protein sequence, read N- to C-terminus: Probable protein phosphatase 2C 42 (352 aa).

Positions 26 to 321 constitute a PPM-type phosphatase domain; sequence AYASSAMQGY…DNMSVILVRF (296 aa). Mn(2+) is bound by residues Asp62, Gly63, Asp267, and Asp312. Positions 328–352 are disordered; sequence RGARAATSSTSTGTVPSRHSKSISL. Residues 329-341 are compositionally biased toward low complexity; the sequence is GARAATSSTSTGT.

This sequence belongs to the PP2C family. Requires Mg(2+) as cofactor. It depends on Mn(2+) as a cofactor.

It catalyses the reaction O-phospho-L-seryl-[protein] + H2O = L-seryl-[protein] + phosphate. The catalysed reaction is O-phospho-L-threonyl-[protein] + H2O = L-threonyl-[protein] + phosphate. The polypeptide is Probable protein phosphatase 2C 42 (Oryza sativa subsp. japonica (Rice)).